Reading from the N-terminus, the 290-residue chain is Ribosome-inactivating protein bryodin I (290 aa).

Residues 1 to 23 (MIKLLVLWLLILTIFLKSPTVEG) form the signal peptide. Catalysis depends on residues Glu-183 and Glu-212. N-linked (GlcNAc...) asparagine glycosylation is found at Asn-214 and Asn-250. Residues 271-290 (AIGEDISMTLIGFEHGLYGI) constitute a propeptide, removed in mature form.

It belongs to the ribosome-inactivating protein family. Type 1 RIP subfamily. In terms of processing, appears to undergo proteolytic cleavage in the C-terminal to produce a shorter protein.

It catalyses the reaction Endohydrolysis of the N-glycosidic bond at one specific adenosine on the 28S rRNA.. Ribosome-inactivating protein of type 1, inhibits protein synthesis in animal cells. This Bryonia dioica (Red bryony) protein is Ribosome-inactivating protein bryodin I.